A 382-amino-acid polypeptide reads, in one-letter code: Anhydro-N-acetylmuramic acid kinase (382 aa).

G9–D16 lines the ATP pocket.

Belongs to the anhydro-N-acetylmuramic acid kinase family.

The enzyme catalyses 1,6-anhydro-N-acetyl-beta-muramate + ATP + H2O = N-acetyl-D-muramate 6-phosphate + ADP + H(+). It functions in the pathway amino-sugar metabolism; 1,6-anhydro-N-acetylmuramate degradation. The protein operates within cell wall biogenesis; peptidoglycan recycling. Catalyzes the specific phosphorylation of 1,6-anhydro-N-acetylmuramic acid (anhMurNAc) with the simultaneous cleavage of the 1,6-anhydro ring, generating MurNAc-6-P. Is required for the utilization of anhMurNAc either imported from the medium or derived from its own cell wall murein, and thus plays a role in cell wall recycling. The sequence is that of Anhydro-N-acetylmuramic acid kinase from Bacillus thuringiensis subsp. konkukian (strain 97-27).